The following is a 450-amino-acid chain: Sorting nexin-4 (450 aa).

An N-acetylmethionine modification is found at Met1. The disordered stretch occupies residues 1–46 (MEQAPPDPERQLQPAPLEPLGSPDAGLGAAVGKEAEGAGEESSGVD). Ser22 carries the post-translational modification Phosphoserine. The PX domain maps to 61 to 187 (SVSEAEKRTG…YLFLTQEGNW (127 aa)). Residues Arg106, Ser108, Lys132, and Arg154 each contribute to the a 1,2-diacyl-sn-glycero-3-phospho-(1D-myo-inositol-3-phosphate) site.

This sequence belongs to the sorting nexin family. In terms of assembly, heterodimer; heterodimerizes with SNX7 or SNX30. Interacts with WWC1/KIBRA. Identified in a complex with WWC1/KIBRA and dynein components DYNLL1 and DYNC1I2. Interacts with BIN1.

It is found in the early endosome membrane. Involved in the regulation of endocytosis and in several stages of intracellular trafficking. Plays a role in recycling endocytosed transferrin receptor and prevent its degradation. Involved in autophagosome assembly by regulating trafficking and recycling of phospholipid scramblase ATG9A. This chain is Sorting nexin-4, found in Homo sapiens (Human).